We begin with the raw amino-acid sequence, 474 residues long: Proline--tRNA ligase (474 aa).

The protein belongs to the class-II aminoacyl-tRNA synthetase family. ProS type 3 subfamily. Homodimer.

It localises to the cytoplasm. It carries out the reaction tRNA(Pro) + L-proline + ATP = L-prolyl-tRNA(Pro) + AMP + diphosphate. Its function is as follows. Catalyzes the attachment of proline to tRNA(Pro) in a two-step reaction: proline is first activated by ATP to form Pro-AMP and then transferred to the acceptor end of tRNA(Pro). The sequence is that of Proline--tRNA ligase from Mycoplasma mycoides subsp. mycoides SC (strain CCUG 32753 / NCTC 10114 / PG1).